We begin with the raw amino-acid sequence, 90 residues long: Probable Fe(2+)-trafficking protein (90 aa).

The protein belongs to the Fe(2+)-trafficking protein family.

In terms of biological role, could be a mediator in iron transactions between iron acquisition and iron-requiring processes, such as synthesis and/or repair of Fe-S clusters in biosynthetic enzymes. This Haemophilus influenzae (strain PittEE) protein is Probable Fe(2+)-trafficking protein.